Here is a 154-residue protein sequence, read N- to C-terminus: OCIA domain-containing protein 2 (154 aa).

The segment at Met1–Gln22 is disordered. In terms of domain architecture, OCIA spans Met1–Ala120. N6-acetyllysine is present on Lys41.

In terms of assembly, interacts (via OCIA domain) with OCIAD1/ASRIJ and STAT3.

It localises to the endosome. The protein localises to the mitochondrion. It is found in the mitochondrion inner membrane. In terms of biological role, has an essential role in the assembly of mitochondrial respiratory chain complex III. Is also required for STAT3 activation and plays a role in cell migration. The polypeptide is OCIA domain-containing protein 2 (OCIAD2) (Homo sapiens (Human)).